An 880-amino-acid polypeptide reads, in one-letter code: A-adding tRNA nucleotidyltransferase (880 aa).

2 consecutive CBS domains span residues 315–373 and 377–435; these read MSSP…NLPV and MHTE…RNAE. 487-490 is a binding site for ATP; the sequence is GFVR. Mg(2+) is bound by residues Asp-500 and Asp-502. ATP is bound by residues 574–575, Asn-579, 619–628, Arg-632, and Arg-661; these read RD and DPTRVFRAIR.

Belongs to the tRNA nucleotidyltransferase/poly(A) polymerase family. Requires Mg(2+) as cofactor.

It carries out the reaction a tRNA with a 3' CC end + ATP = a tRNA with a 3' CCA end + diphosphate. In terms of biological role, tRNA nucleotidyltransferase involved in the synthesis of the tRNA CCA terminus. Adds the terminal adenosine residue to tRNA. This Geobacter sulfurreducens (strain ATCC 51573 / DSM 12127 / PCA) protein is A-adding tRNA nucleotidyltransferase.